Here is a 331-residue protein sequence, read N- to C-terminus: 4-hydroxythreonine-4-phosphate dehydrogenase (331 aa).

Residues His-137 and Thr-138 each contribute to the substrate site. 3 residues coordinate a divalent metal cation: His-167, His-212, and His-267. Positions 275, 284, and 293 each coordinate substrate.

This sequence belongs to the PdxA family. As to quaternary structure, homodimer. Zn(2+) serves as cofactor. Mg(2+) is required as a cofactor. It depends on Co(2+) as a cofactor.

The protein resides in the cytoplasm. It carries out the reaction 4-(phosphooxy)-L-threonine + NAD(+) = 3-amino-2-oxopropyl phosphate + CO2 + NADH. The protein operates within cofactor biosynthesis; pyridoxine 5'-phosphate biosynthesis; pyridoxine 5'-phosphate from D-erythrose 4-phosphate: step 4/5. In terms of biological role, catalyzes the NAD(P)-dependent oxidation of 4-(phosphooxy)-L-threonine (HTP) into 2-amino-3-oxo-4-(phosphooxy)butyric acid which spontaneously decarboxylates to form 3-amino-2-oxopropyl phosphate (AHAP). This Yersinia pseudotuberculosis serotype I (strain IP32953) protein is 4-hydroxythreonine-4-phosphate dehydrogenase.